Consider the following 846-residue polypeptide: Leucine--tRNA ligase (846 aa).

Positions 47 to 57 (PYPSGRIHMGH) match the 'HIGH' region motif. A 'KMSKS' region motif is present at residues 621–625 (KMSKS). ATP is bound at residue lysine 624.

It belongs to the class-I aminoacyl-tRNA synthetase family.

Its subcellular location is the cytoplasm. It catalyses the reaction tRNA(Leu) + L-leucine + ATP = L-leucyl-tRNA(Leu) + AMP + diphosphate. This chain is Leucine--tRNA ligase, found in Zymomonas mobilis subsp. mobilis (strain ATCC 31821 / ZM4 / CP4).